Here is a 439-residue protein sequence, read N- to C-terminus: Rho GTPase-activating protein 1 (439 aa).

N-acetylmethionine is present on Met1. Residues 28 to 48 (IDEKNWPSDEMPDFPKSDDSK) are compositionally biased toward basic and acidic residues. The interval 28–55 (IDEKNWPSDEMPDFPKSDDSKSSSPEPV) is disordered. Phosphoserine is present on residues Ser44, Ser47, Ser50, and Ser51. Residues 63-218 (PYYDIARHQI…QVLKYDDFLK (156 aa)) form the CRAL-TRIO domain. At Tyr65 the chain carries Phosphotyrosine. At Lys80 the chain carries N6-acetyllysine. An SH3-binding motif is present at residues 228–238 (PKPMPPRPPLP). In terms of domain architecture, Rho-GAP spans 244-431 (VSLQHLQEKS…FLLDHQGELF (188 aa)).

Found in a complex with XPO7, EIF4A1, ARHGAP1, VPS26A, VPS29, VPS35 and SFN. Interacts with BNIPL.

Its subcellular location is the cytoplasm. Functionally, GTPase activator for the Rho, Rac and Cdc42 proteins, converting them to the putatively inactive GDP-bound state. Cdc42 seems to be the preferred substrate. The chain is Rho GTPase-activating protein 1 (Arhgap1) from Mus musculus (Mouse).